Reading from the N-terminus, the 470-residue chain is Neuraminidase (470 aa).

Residues 1-14 (MNPNQKIITIGSIS) lie on the Intravirion side of the membrane. The involved in apical transport and lipid raft association stretch occupies residues 11-32 (GSISLGLVVFNVLLHVVSIIVT). The chain crosses the membrane as a helical span at residues 15 to 35 (LGLVVFNVLLHVVSIIVTVLI). The tract at residues 32–86 (TVLILGRGGNNGICNETVVREYNETVRIEKVTQWHNTSVVEYMPYWNEGTYMNNT) is hypervariable stalk region. The Virion surface segment spans residues 36-470 (LGRGGNNGIC…AILPFDIDKM (435 aa)). N-linked (GlcNAc...) asparagine; by host glycosylation is found at asparagine 46, asparagine 54, asparagine 67, and asparagine 84. Residues 89 to 470 (ICDVKGFAPF…AILPFDIDKM (382 aa)) are head of neuraminidase. Intrachain disulfides connect cysteine 90-cysteine 417, cysteine 122-cysteine 127, cysteine 182-cysteine 229, cysteine 231-cysteine 236, cysteine 277-cysteine 290, cysteine 279-cysteine 288, cysteine 316-cysteine 335, and cysteine 421-cysteine 446. Arginine 116 contributes to the substrate binding site. Asparagine 144 carries an N-linked (GlcNAc...) asparagine; by host glycan. Aspartate 149 functions as the Proton donor/acceptor in the catalytic mechanism. Arginine 150 lines the substrate pocket. 275–276 (EE) is a binding site for substrate. Residue arginine 291 coordinates substrate. Aspartate 292 provides a ligand contact to Ca(2+). N-linked (GlcNAc...) asparagine; by host glycosylation is present at asparagine 293. Residues glycine 296 and aspartate 322 each coordinate Ca(2+). Arginine 368 contacts substrate. Asparagine 398 is a glycosylation site (N-linked (GlcNAc...) asparagine; by host). The Nucleophile role is filled by tyrosine 402.

It belongs to the glycosyl hydrolase 34 family. In terms of assembly, homotetramer. Requires Ca(2+) as cofactor. Post-translationally, N-glycosylated.

It is found in the virion membrane. Its subcellular location is the host apical cell membrane. It catalyses the reaction Hydrolysis of alpha-(2-&gt;3)-, alpha-(2-&gt;6)-, alpha-(2-&gt;8)- glycosidic linkages of terminal sialic acid residues in oligosaccharides, glycoproteins, glycolipids, colominic acid and synthetic substrates.. Its activity is regulated as follows. Inhibited by the neuraminidase inhibitors zanamivir (Relenza) and oseltamivir (Tamiflu). These drugs interfere with the release of progeny virus from infected cells and are effective against all influenza strains. Resistance to neuraminidase inhibitors is quite rare. Functionally, catalyzes the removal of terminal sialic acid residues from viral and cellular glycoconjugates. Cleaves off the terminal sialic acids on the glycosylated HA during virus budding to facilitate virus release. Additionally helps virus spread through the circulation by further removing sialic acids from the cell surface. These cleavages prevent self-aggregation and ensure the efficient spread of the progeny virus from cell to cell. Otherwise, infection would be limited to one round of replication. Described as a receptor-destroying enzyme because it cleaves a terminal sialic acid from the cellular receptors. May facilitate viral invasion of the upper airways by cleaving the sialic acid moieties on the mucin of the airway epithelial cells. Likely to plays a role in the budding process through its association with lipid rafts during intracellular transport. May additionally display a raft-association independent effect on budding. Plays a role in the determination of host range restriction on replication and virulence. Sialidase activity in late endosome/lysosome traffic seems to enhance virus replication. The sequence is that of Neuraminidase from Aves (Horse).